We begin with the raw amino-acid sequence, 490 residues long: Transmembrane protease serine 2 (490 aa).

Residues 1–83 are Cytoplasmic-facing; sequence MALNSGSPPG…ALCTSKSKKS (83 aa). A helical; Signal-anchor for type II membrane protein membrane pass occupies residues 84 to 104; that stretch reads LCLALALGTVLTGAAVAAVLL. Residues 105-490 are Extracellular-facing; sequence WRFWDSNCST…WIYQQMRANS (386 aa). Asn-111 is a glycosylation site (N-linked (GlcNAc...) asparagine). The LDL-receptor class A domain occupies 111–149; that stretch reads NCSTSEMECGSSGTCISSSLWCDGVAHCPNGEDENRCVR. Disulfide bonds link Cys-112/Cys-125, Cys-119/Cys-138, Cys-132/Cys-147, Cys-171/Cys-230, Cys-184/Cys-240, Cys-243/Cys-363, Cys-279/Cys-295, Cys-408/Cys-424, and Cys-435/Cys-463. 4 residues coordinate Ca(2+): Asp-133, Val-135, Asp-143, and Glu-144. One can recognise an SRCR domain in the interval 150-242; that stretch reads LYGQSFILQV…RMVVSLRCIE (93 aa). Residue Asn-212 is glycosylated (N-linked (GlcNAc...) asparagine). In terms of domain architecture, Peptidase S1 spans 254-487; sequence IVGGLNASPG…FTDWIYQQMR (234 aa). Active-site charge relay system residues include His-294 and Asp-343. Catalysis depends on Ser-439, which acts as the Charge relay system. Asn-474 is a glycosylation site (N-linked (GlcNAc...) asparagine).

Belongs to the peptidase S1 family. The catalytically active form interacts with ACE2. Proteolytically processed; by an autocatalytic mechanism. Autocleavage induces active conformation. As to expression, larynx, trachea and bronchi, lung, prostate and kidney.

It is found in the cell membrane. It localises to the secreted. The catalysed reaction is The enzyme cleaves angiotensin-converting enzyme 2 (EC 3.4.17.23) and cleaves influenzea A and B virus and coronavirus spike glycoproteins at arginine residues.. In terms of biological role, plasma membrane-anchored serine protease that cleaves at arginine residues. Participates in proteolytic cascades of relevance for the normal physiologic function of the prostate. Androgen-induced TMPRSS2 activates several substrates that include pro-hepatocyte growth factor/HGF, the protease activated receptor-2/F2RL1 or matriptase/ST14 leading to extracellular matrix disruption. In addition, activates trigeminal neurons and contribute to both spontaneous pain and mechanical allodynia. (Microbial infection) Essential for spread and pathogenesis of influenza A virus (strains H1N1, H3N2 and H7N9) and is involved in proteolytic cleavage and activation of hemagglutinin (HA) protein which is essential for viral infectivity. This Mus musculus (Mouse) protein is Transmembrane protease serine 2 (Tmprss2).